A 444-amino-acid polypeptide reads, in one-letter code: Exopolygalacturonase clone GBGA483 (444 aa).

Residues 1–23 form the signal peptide; that stretch reads MVGSHKASGVLLVLLVVMATTIA. 5 PbH1 repeats span residues 220 to 246, 247 to 268, 270 to 290, 300 to 321, and 330 to 351; these read CKNI…HIGR, SNGV…SIGD, TENL…SIGS, VKGV…RIKT, and ASNI…LIDQ. N-linked (GlcNAc...) asparagine glycosylation is present at Asn-222. Asp-261 serves as the catalytic Proton donor. Cys-263 and Cys-280 form a disulfide bridge. His-284 is a catalytic residue. An N-linked (GlcNAc...) asparagine glycan is attached at Asn-342. Cystine bridges form between Cys-391-Cys-397 and Cys-420-Cys-436.

This sequence belongs to the glycosyl hydrolase 28 family.

The protein localises to the secreted. It localises to the cell wall. The catalysed reaction is [(1-&gt;4)-alpha-D-galacturonosyl](n) + H2O = alpha-D-galacturonate + [(1-&gt;4)-alpha-D-galacturonosyl](n-1). Functionally, may function in depolymerizing pectin during pollen development, germination, and tube growth. Acts as an exo-polygalacturonase. The polypeptide is Exopolygalacturonase clone GBGA483 (Arabidopsis thaliana (Mouse-ear cress)).